The chain runs to 546 residues: MAAKEIIFSDVARTKLTEGVNILANAVKVTLGPKGRNVVLERSFGAPVVTKDGVSVAKEIELADKLQNIGAQLVKEVASRTSDAAGDGTTTATVLAQAIVREGQKYVAAGLNPLDLKRGIDKAVAAAVDALKTISKPTTTSKEIAQVATISANGEESIGQRIAEAIDRVGKEGVITVEDGKSLADELDVVEGLQFDRGYLSPYFINNPDKQIAEIENPYILLHDKKISNIRDLLPVLEQVAKSGRPLLIIAEDVEGEALATLVVNNIRGILKTVAVKAPGFGDRRKALLEDIAILTGGQVVAEETGLALEKATLAELGQAKRIEVGKENTTVIDGAGDAKNIEARVKQIRVQIDEATSDYDREKLQERVAKLAGGVAVIKVGGATEIEVKEKKDRVDDALHATRAAVEEGIVPGGGVALIRVRQAIRELKGANADQDAGIKIVLRALEEPLRQIVTNAGEEASVVVAKVAEGSGNFGYNAQTGEYGDLVESGVLDPTKVTRTALQNAASVAGLLLTTDATVFEAPKDAAPATAPGGPGAGGPGFDF.

ATP is bound by residues 30 to 33 (TLGP), K51, 87 to 91 (DGTTT), G415, and D495. Residues 527–546 (DAAPATAPGGPGAGGPGFDF) form a disordered region. The span at 535–546 (GGPGAGGPGFDF) shows a compositional bias: gly residues.

It belongs to the chaperonin (HSP60) family. In terms of assembly, forms a cylinder of 14 subunits composed of two heptameric rings stacked back-to-back. Interacts with the co-chaperonin GroES.

The protein localises to the cytoplasm. The catalysed reaction is ATP + H2O + a folded polypeptide = ADP + phosphate + an unfolded polypeptide.. Functionally, together with its co-chaperonin GroES, plays an essential role in assisting protein folding. The GroEL-GroES system forms a nano-cage that allows encapsulation of the non-native substrate proteins and provides a physical environment optimized to promote and accelerate protein folding. This is Chaperonin GroEL 2 from Burkholderia ambifaria (strain ATCC BAA-244 / DSM 16087 / CCUG 44356 / LMG 19182 / AMMD) (Burkholderia cepacia (strain AMMD)).